Consider the following 507-residue polypeptide: RNA-splicing ligase RtcB homolog (507 aa).

Asp-121, Cys-124, His-229, His-261, and His-355 together coordinate Mn(2+). A GMP-binding site is contributed by 228–232 (NHYAE). GMP-binding positions include 355-356 (HN), 404-407 (GGTM), Ser-411, 430-433 (HGAG), and Lys-506. The GMP-histidine intermediate role is filled by His-430.

The protein belongs to the RtcB family. In terms of assembly, catalytic component of the tRNA-splicing ligase complex. Mn(2+) is required as a cofactor.

It carries out the reaction a 3'-end 3'-phospho-ribonucleotide-RNA + a 5'-end dephospho-ribonucleoside-RNA + GTP = a ribonucleotidyl-ribonucleotide-RNA + GMP + diphosphate. The catalysed reaction is a 3'-end 2',3'-cyclophospho-ribonucleotide-RNA + a 5'-end dephospho-ribonucleoside-RNA + GTP + H2O = a ribonucleotidyl-ribonucleotide-RNA + GMP + diphosphate + H(+). Its function is as follows. Catalytic subunit of the tRNA-splicing ligase complex that acts by directly joining spliced tRNA halves to mature-sized tRNAs by incorporating the precursor-derived splice junction phosphate into the mature tRNA as a canonical 3',5'-phosphodiester. May act as an RNA ligase with broad substrate specificity, and may function toward other RNAs. The protein is RNA-splicing ligase RtcB homolog of Plasmodium yoelii yoelii.